The primary structure comprises 95 residues: Integration host factor subunit beta (95 aa).

This sequence belongs to the bacterial histone-like protein family. As to quaternary structure, heterodimer of an alpha and a beta chain.

Its function is as follows. This protein is one of the two subunits of integration host factor, a specific DNA-binding protein that functions in genetic recombination as well as in transcriptional and translational control. This chain is Integration host factor subunit beta, found in Klebsiella pneumoniae subsp. pneumoniae (strain ATCC 700721 / MGH 78578).